The sequence spans 307 residues: Thioredoxin-related transmembrane protein 2-B (307 aa).

The N-terminal stretch at 1–19 is a signal peptide; sequence MALLTPLFAFLYHLPQVYK. Topologically, residues 20–111 are extracellular; sequence WLLKPYYIAS…VILFFRLDIR (92 aa). A helical membrane pass occupies residues 112 to 132; it reads LGLLYLTLCIVFLMTCKPPLY. The Thioredoxin domain maps to 132 to 269; sequence YMGPEYIKYF…LYQKSKKLGK (138 aa). Topologically, residues 133–307 are cytoplasmic; that stretch reads MGPEYIKYFS…AMDTESKKDK (175 aa). The tract at residues 268–307 is disordered; that stretch reads GKTKEKLERPSELVFSTVPEEEEPEAETISAMDTESKKDK. Residues 269-278 show a composition bias toward basic and acidic residues; the sequence is KTKEKLERPS. A Di-lysine motif motif is present at residues 304–307; sequence KKDK.

As to quaternary structure, monomer. Homodimer; disulfide-linked. Occurs in both reduced and oxidized monomeric form. Oxidative conditions increase homodimerization.

It is found in the endoplasmic reticulum membrane. It localises to the mitochondrion membrane. Functionally, endoplasmic reticulum and mitochondria-associated protein that probably functions as a regulator of cellular redox state and thereby regulates protein post-translational modification, protein folding and mitochondrial activity. This Danio rerio (Zebrafish) protein is Thioredoxin-related transmembrane protein 2-B (tmx2b).